The chain runs to 566 residues: Oxygen-dependent choline dehydrogenase (566 aa).

FAD is bound at residue 7-36 (DYIICGAGSAGNVLATRLTEDPDVTVLLLE). The tract at residues 180 to 202 (NGYQQEGFGPMDRTVTPKGRRAS) is disordered. Residue histidine 474 is the Proton acceptor of the active site.

This sequence belongs to the GMC oxidoreductase family. FAD is required as a cofactor.

The enzyme catalyses choline + A = betaine aldehyde + AH2. It catalyses the reaction betaine aldehyde + NAD(+) + H2O = glycine betaine + NADH + 2 H(+). The protein operates within amine and polyamine biosynthesis; betaine biosynthesis via choline pathway; betaine aldehyde from choline (cytochrome c reductase route): step 1/1. Involved in the biosynthesis of the osmoprotectant glycine betaine. Catalyzes the oxidation of choline to betaine aldehyde and betaine aldehyde to glycine betaine at the same rate. The protein is Oxygen-dependent choline dehydrogenase of Burkholderia lata (strain ATCC 17760 / DSM 23089 / LMG 22485 / NCIMB 9086 / R18194 / 383).